A 365-amino-acid chain; its full sequence is Peptide chain release factor 2 (365 aa).

An N5-methylglutamine modification is found at Gln252.

Belongs to the prokaryotic/mitochondrial release factor family. In terms of processing, methylated by PrmC. Methylation increases the termination efficiency of RF2.

It localises to the cytoplasm. Its function is as follows. Peptide chain release factor 2 directs the termination of translation in response to the peptide chain termination codons UGA and UAA. The protein is Peptide chain release factor 2 of Haemophilus ducreyi (strain 35000HP / ATCC 700724).